Consider the following 1190-residue polypeptide: DNA-directed RNA polymerase subunit beta (1190 aa).

This sequence belongs to the RNA polymerase beta chain family. As to quaternary structure, the RNAP catalytic core consists of 2 alpha, 1 beta, 1 beta' and 1 omega subunit. When a sigma factor is associated with the core the holoenzyme is formed, which can initiate transcription.

The catalysed reaction is RNA(n) + a ribonucleoside 5'-triphosphate = RNA(n+1) + diphosphate. Its function is as follows. DNA-dependent RNA polymerase catalyzes the transcription of DNA into RNA using the four ribonucleoside triphosphates as substrates. In Geobacillus thermodenitrificans (strain NG80-2), this protein is DNA-directed RNA polymerase subunit beta.